We begin with the raw amino-acid sequence, 555 residues long: WRKY transcription factor WRKY24 (555 aa).

Disordered stretches follow at residues 38 to 65 and 132 to 248; these read GGGG…PSSF and QTAP…CTFP. Residues 51–61 are compositionally biased toward pro residues; it reads PSLPLSPPPVS. A compositionally biased stretch (low complexity) spans 163–194; that stretch reads QQQQQPWGYQQQPAGMDAGANAASFGAAPFQA. A DNA-binding region (WRKY 1) is located at residues 214-278; that stretch reads SQRRSSDDGY…YKGTHNHAKP (65 aa). The short motif at 253-259 is the Nuclear localization signal element; that stretch reads KKKVERS. The tract at residues 270-367 is disordered; the sequence is KGTHNHAKPQ…EGISMAGNRT (98 aa). 2 stretches are compositionally biased toward polar residues: residues 277–294 and 310–320; these read KPQN…QVLQ and TAATPENSSAS. Residues 347–356 are compositionally biased toward basic and acidic residues; it reads DSKRWRKDGD. Positions 379–444 form a DNA-binding region, WRKY 2; it reads SDIDILDDGY…YEGKHNHDVP (66 aa). The interval 466-555 is transcription repression of gibberellic acid (GA)-induced promoters; it reads HPYLPNQPPP…DDMFFQNSLY (90 aa). Disordered regions lie at residues 471 to 498 and 513 to 555; these read NQPP…GQGP and GFDD…NSLY.

This sequence belongs to the WRKY group II-a family. In terms of tissue distribution, expressed in aleurone cells. Mostly expressed in aleurone layers and leaves, and, to a lower extent, in roots, panicles and embryos.

The protein resides in the nucleus. Its function is as follows. Transcription repressor. Interacts specifically with the W box (5'-(T)TGAC[CT]-3'), a frequently occurring elicitor-responsive cis-acting element. Negative regulator of both gibberellic acid (GA) and abscisic acid (ABA) signaling in aleurone cells, probably by interfering with GAM1, via the specific repression of GA- and ABA-induced promoters. In Oryza sativa subsp. indica (Rice), this protein is WRKY transcription factor WRKY24.